A 647-amino-acid chain; its full sequence is MADVYPVDPAFAADARITREQYATLYRESIEHPEQFWGKAAQRLDWFKQPTQIKDVSFALDDFHVRWFGDGELNASVNCLDRQLATRGDKTALLFEPDSPDSPSYPVTYRELYERVCKLGNALRNLGVKKGDRVTIYLPMIVDAAVAMLACARIGAVHSVVFGGFAANSIADRVIDCQSKLIITADEGLRGGKKIPLKANVDAALKIPGTNTVETVLVVRHTGGAVDMQAPRDRWFHDVVDGQPAECEPERMNAEDPLFILYTSGSTGKPKGVLHTTAGYLLFASYTHEVVFDLREDDIYWCTADVGWVTGHSYIVYGPLANGATAVMFEGVPNYPNVSRFWEVIDKHQVTIFYTAPTAIRALMREGEAPVKKTSRSSLRLLGSVGEPINPEAWRWYYEVVGDSRCPIVDTWWQTETGGILISPLAGAVDLKPGSATLPFFGVQPALVDAEGKILEGATEGNLVLLDSWPGQMRTVYGDHQRFIDTYFRTYPGSYFTGDGCRRDADGYYWITGRVDDVINVSGHRIGTAEVESALVSHPKVAEAAVVGFPHDVKGQGIYAYVTLIAGETPSEELHKELVSWVRKEIGPIASPDHLQWAPGLPKTRSGKIMRRILRKIAENAPDQLGDTSTLADPSVVDSLVNERLTR.

Residues 190 to 193 (RGGK), T310, and N334 contribute to the CoA site. ATP contacts are provided by residues 386–388 (GEP), 410–415 (DTWWQT), D499, and R514. CoA is bound at residue S522. R525 serves as a coordination point for ATP. Residues V536, H538, and V541 each contribute to the Mg(2+) site. R583 contributes to the CoA binding site. K608 carries the N6-acetyllysine modification.

It belongs to the ATP-dependent AMP-binding enzyme family. Mg(2+) serves as cofactor. Acetylated. Deacetylation by the SIR2-homolog deacetylase activates the enzyme.

The enzyme catalyses acetate + ATP + CoA = acetyl-CoA + AMP + diphosphate. Catalyzes the conversion of acetate into acetyl-CoA (AcCoA), an essential intermediate at the junction of anabolic and catabolic pathways. AcsA undergoes a two-step reaction. In the first half reaction, AcsA combines acetate with ATP to form acetyl-adenylate (AcAMP) intermediate. In the second half reaction, it can then transfer the acetyl group from AcAMP to the sulfhydryl group of CoA, forming the product AcCoA. This Xanthomonas campestris pv. campestris (strain 8004) protein is Acetyl-coenzyme A synthetase.